The primary structure comprises 187 residues: GMP synthase [glutamine-hydrolyzing] subunit A (187 aa).

Residues 1 to 187 (MILIIDNHGQ…KNFAKLCGEL (187 aa)) form the Glutamine amidotransferase type-1 domain. The active-site Nucleophile is the Cys-76. Residues His-164 and Glu-166 contribute to the active site.

As to quaternary structure, heterodimer composed of a glutamine amidotransferase subunit (A) and a GMP-binding subunit (B).

It carries out the reaction XMP + L-glutamine + ATP + H2O = GMP + L-glutamate + AMP + diphosphate + 2 H(+). It participates in purine metabolism; GMP biosynthesis; GMP from XMP (L-Gln route): step 1/1. Functionally, catalyzes the synthesis of GMP from XMP. This Methanopyrus kandleri (strain AV19 / DSM 6324 / JCM 9639 / NBRC 100938) protein is GMP synthase [glutamine-hydrolyzing] subunit A.